The primary structure comprises 146 residues: Protein translocase subunit SecE (146 aa).

Positions 1-81 (MSDERYAASD…KVKKPKKSAD (81 aa)) are disordered. Residues 10–20 (DGGGTEVGSGT) show a composition bias toward gly residues. The segment covering 45–54 (RAANASNTGA) has biased composition (polar residues). Residues 69-81 (KEGKVKKPKKSAD) are compositionally biased toward basic and acidic residues. A helical transmembrane segment spans residues 118–138 (VVLAFLAFMVALVGLADFGLA).

The protein belongs to the SecE/SEC61-gamma family. As to quaternary structure, component of the Sec protein translocase complex. Heterotrimer consisting of SecY, SecE and SecG subunits. The heterotrimers can form oligomers, although 1 heterotrimer is thought to be able to translocate proteins. Interacts with the ribosome. Interacts with SecDF, and other proteins may be involved. Interacts with SecA.

The protein resides in the cell membrane. Functionally, essential subunit of the Sec protein translocation channel SecYEG. Clamps together the 2 halves of SecY. May contact the channel plug during translocation. This Mycobacterium leprae (strain TN) protein is Protein translocase subunit SecE.